The chain runs to 743 residues: Polyribonucleotide nucleotidyltransferase (743 aa).

Mg(2+)-binding residues include Asp-489 and Asp-495. The KH domain maps to 556–618 (PRIEKMHIGK…PCIDAAIGMI (63 aa)). The 71-residue stretch at 628 to 698 (GETYPGKITS…KTGKFKLSRK (71 aa)) folds into the S1 motif domain. The segment at 704–743 (PEGYVEPQPRERRERREGGREGGRNFERRGGDRDHREPRG) is disordered.

The protein belongs to the polyribonucleotide nucleotidyltransferase family. Mg(2+) serves as cofactor.

The protein localises to the cytoplasm. The enzyme catalyses RNA(n+1) + phosphate = RNA(n) + a ribonucleoside 5'-diphosphate. Functionally, involved in mRNA degradation. Catalyzes the phosphorolysis of single-stranded polyribonucleotides processively in the 3'- to 5'-direction. This chain is Polyribonucleotide nucleotidyltransferase, found in Porphyromonas gingivalis (strain ATCC 33277 / DSM 20709 / CIP 103683 / JCM 12257 / NCTC 11834 / 2561).